The chain runs to 558 residues: Urease subunit alpha 2 (558 aa).

One can recognise a Urease domain in the interval 129–558; it reads GAVDTHVHLL…SVSLNRLYFL (430 aa). Ni(2+)-binding residues include H134, H136, and K214. K214 is modified (N6-carboxylysine). H216 lines the substrate pocket. H243 and H269 together coordinate Ni(2+). The Proton donor role is filled by H317. D357 provides a ligand contact to Ni(2+).

The protein belongs to the metallo-dependent hydrolases superfamily. Urease alpha subunit family. As to quaternary structure, may form a heterohexamer of 3 UreC (alpha) and 3 UreAB (gamma/beta) subunits. May also form a heterotrimer of UreA (gamma), UreB (beta) and UreC (alpha) subunits. Three heterotrimers associate to form the active enzyme. Ni cation serves as cofactor. Post-translationally, carboxylation allows a single lysine to coordinate two nickel ions.

It localises to the cytoplasm. It carries out the reaction urea + 2 H2O + H(+) = hydrogencarbonate + 2 NH4(+). It participates in nitrogen metabolism; urea degradation; CO(2) and NH(3) from urea (urease route): step 1/1. The polypeptide is Urease subunit alpha 2 (Streptomyces coelicolor (strain ATCC BAA-471 / A3(2) / M145)).